Consider the following 91-residue polypeptide: Putative septation protein SpoVG (91 aa).

Belongs to the SpoVG family.

Its function is as follows. Could be involved in septation. In Caldanaerobacter subterraneus subsp. tengcongensis (strain DSM 15242 / JCM 11007 / NBRC 100824 / MB4) (Thermoanaerobacter tengcongensis), this protein is Putative septation protein SpoVG.